A 132-amino-acid chain; its full sequence is NADPH-dependent 7-cyano-7-deazaguanine reductase (132 aa).

Cys-34 (thioimide intermediate) is an active-site residue. The active-site Proton donor is the Asp-41. Substrate-binding positions include 56-58 and 75-76; these read IEL and HE.

This sequence belongs to the GTP cyclohydrolase I family. QueF type 1 subfamily.

It localises to the cytoplasm. It catalyses the reaction 7-aminomethyl-7-carbaguanine + 2 NADP(+) = 7-cyano-7-deazaguanine + 2 NADPH + 3 H(+). It participates in tRNA modification; tRNA-queuosine biosynthesis. Its function is as follows. Catalyzes the NADPH-dependent reduction of 7-cyano-7-deazaguanine (preQ0) to 7-aminomethyl-7-deazaguanine (preQ1). This chain is NADPH-dependent 7-cyano-7-deazaguanine reductase, found in Vesicomyosocius okutanii subsp. Calyptogena okutanii (strain HA).